A 95-amino-acid chain; its full sequence is UPF0235 protein Sama_2480 (95 aa).

It belongs to the UPF0235 family.

The sequence is that of UPF0235 protein Sama_2480 from Shewanella amazonensis (strain ATCC BAA-1098 / SB2B).